The primary structure comprises 838 residues: Probable beta-glucosidase I (838 aa).

N-linked (GlcNAc...) asparagine glycosylation occurs at asparagine 197. Aspartate 225 is a catalytic residue. The PA14 domain maps to 395 to 555 (DGKKGFKFRV…SQEELISKAA (161 aa)). N-linked (GlcNAc...) asparagine glycosylation occurs at asparagine 493.

Belongs to the glycosyl hydrolase 3 family.

It is found in the secreted. It carries out the reaction Hydrolysis of terminal, non-reducing beta-D-glucosyl residues with release of beta-D-glucose.. It participates in glycan metabolism; cellulose degradation. Beta-glucosidases are one of a number of cellulolytic enzymes involved in the degradation of cellulosic biomass. Catalyzes the last step releasing glucose from the inhibitory cellobiose. The protein is Probable beta-glucosidase I (bglI) of Neosartorya fischeri (strain ATCC 1020 / DSM 3700 / CBS 544.65 / FGSC A1164 / JCM 1740 / NRRL 181 / WB 181) (Aspergillus fischerianus).